A 131-amino-acid chain; its full sequence is Hyastatin (131 aa).

The N-terminal stretch at M1–A16 is a signal peptide. 3 disulfide bridges follow: C103-C117, C107-C124, and C118-C125. K130 is subject to Lysine amide.

Strongly expressed in hemocytes, with weaker expression in gills and epidermis. Expressed at low levels in hepatopancreas.

It is found in the cytoplasmic granule. Functionally, antimicrobial peptide. Has strong antibacterial activity against the Gram-positive bacterium C.glutamicum (MIC=0.4 uM) and the Gram-negative bacterium E.coli (MIC=12.5 uM). Has weak antibacterial activity against the Gram-positive bacterium S.aureus (MIC&gt;50 uM) and the Gram-negative bacterium P.aeruginosa (MIC&gt;50 uM). Has antifungal activity against S.cerevisiae (MIC=12.5) and C.albicans (MIC=6.3 uM). Has weak antifungal activity against the mold B.cinerea. Presents chitin-binding activity. In Hyas araneus (Atlantic lyre crab), this protein is Hyastatin.